The sequence spans 195 residues: Small t antigen (195 aa).

M1 carries the post-translational modification N-acetylmethionine; by host. A J domain is found at 12–75; sequence RLLELLKLPR…VYNLRMNLGG (64 aa).

As to quaternary structure, interacts with host PPP2R1A; the interaction inhibits PP2A activity.

The protein localises to the host cytoplasm. The protein resides in the host nucleus. In terms of biological role, promotes efficient viral genome replication by accelerating both G1 and S phase progression of the cell cycle. Inhibits host PP2A by binding to the A subunit, thereby displacing lower affinity regulatory B subunit. Inactivation of PP2A in turn results in the transactivation of cyclin A and cyclin D1 promoters. Late during the infection cycle, ST may induce dephosphorylation of host MTOR, leading to the inhibition of cap-dependent translation. May establish and maintain high levels of viral genomes during persistent infection in cell culture. This chain is Small t antigen, found in Mus musculus (Mouse).